A 35-amino-acid polypeptide reads, in one-letter code: Natriuretic peptide TNPb (35 aa).

Cysteine 9 and cysteine 25 are disulfide-bonded.

As to expression, expressed by the venom gland.

It localises to the secreted. Its function is as follows. Snake venom natriuretic peptide that exhibits vasoactive and probable hypotensive activity. Is only weakly active on natriuretic peptide receptor-C (NPR3). Stimulates cGMP production through the natriuretic peptide receptor 1 (NPR1) with moderate potencies for the rat NPR1 (EC(50)=1200 nM), and very weak potencies over human NPR1 (30% activation at 10 uM). In vivo, does not impact systolic and diastolic blood pressure, as well as heart rate, when intravenously injected in conscious rabbits. Does not affect the bradycardia due to cardiac afferent stimulation (Bezold-Jarisch reflex). The chain is Natriuretic peptide TNPb from Oxyuranus microlepidotus (Inland taipan).